A 599-amino-acid polypeptide reads, in one-letter code: Kelch-like protein 41a (599 aa).

Residues 32–102 (VDCILKVGDR…LYSADIDITD (71 aa)) form the BTB domain. One can recognise a BACK domain in the interval 137-239 (CLAIFRMGLV…PEKYLKEKVE (103 aa)). Kelch repeat units lie at residues 339–391 (LLYV…EFEN), 393–440 (LFAV…SQNG), 441–488 (LVYC…VHKG), 489–535 (KIVV…SVDG), and 537–591 (LYAV…SMRL).

The protein localises to the cytoplasm. It localises to the cytoskeleton. Its subcellular location is the sarcoplasmic reticulum membrane. It is found in the endoplasmic reticulum membrane. In terms of biological role, involved in skeletal muscle development and differentiation. In Danio rerio (Zebrafish), this protein is Kelch-like protein 41a (klhl41a).